A 483-amino-acid polypeptide reads, in one-letter code: uncharacterized protein (483 aa).

Residues 96–137 form a WD repeat; the sequence is IQCDQDPLSSISWSPSGELLLWSSFDSKITVWSLNTQKGYLL.

This is an uncharacterized protein from Schizosaccharomyces pombe (strain 972 / ATCC 24843) (Fission yeast).